We begin with the raw amino-acid sequence, 196 residues long: Probable malonic semialdehyde reductase RutE (196 aa).

The protein belongs to the nitroreductase family. HadB/RutE subfamily. It depends on FMN as a cofactor.

The enzyme catalyses 3-hydroxypropanoate + NADP(+) = 3-oxopropanoate + NADPH + H(+). Functionally, may reduce toxic product malonic semialdehyde to 3-hydroxypropionic acid, which is excreted. This chain is Probable malonic semialdehyde reductase RutE, found in Enterobacter sp. (strain 638).